The primary structure comprises 89 residues: Large ribosomal subunit protein bL27 (89 aa).

Positions 1 to 23 (MAHKKAGGSSRNGRDSHSKRLGV) are disordered.

This sequence belongs to the bacterial ribosomal protein bL27 family.

The polypeptide is Large ribosomal subunit protein bL27 (Mesorhizobium japonicum (strain LMG 29417 / CECT 9101 / MAFF 303099) (Mesorhizobium loti (strain MAFF 303099))).